Consider the following 364-residue polypeptide: 4-hydroxythreonine-4-phosphate dehydrogenase (364 aa).

H138 and T139 together coordinate substrate. The a divalent metal cation site is built by H169, H214, and H269. 3 residues coordinate substrate: K277, N286, and R295.

Belongs to the PdxA family. In terms of assembly, homodimer. A divalent metal cation is required as a cofactor.

It localises to the cytoplasm. The catalysed reaction is 4-(phosphooxy)-L-threonine + NAD(+) = 3-amino-2-oxopropyl phosphate + CO2 + NADH. The protein operates within cofactor biosynthesis; pyridoxine 5'-phosphate biosynthesis; pyridoxine 5'-phosphate from D-erythrose 4-phosphate: step 4/5. Functionally, catalyzes the NAD(P)-dependent oxidation of 4-(phosphooxy)-L-threonine (HTP) into 2-amino-3-oxo-4-(phosphooxy)butyric acid which spontaneously decarboxylates to form 3-amino-2-oxopropyl phosphate (AHAP). This chain is 4-hydroxythreonine-4-phosphate dehydrogenase, found in Bacteroides thetaiotaomicron (strain ATCC 29148 / DSM 2079 / JCM 5827 / CCUG 10774 / NCTC 10582 / VPI-5482 / E50).